Here is a 99-residue protein sequence, read N- to C-terminus: Aspartyl/glutamyl-tRNA(Asn/Gln) amidotransferase subunit C (99 aa).

It belongs to the GatC family. In terms of assembly, heterotrimer of A, B and C subunits.

It catalyses the reaction L-glutamyl-tRNA(Gln) + L-glutamine + ATP + H2O = L-glutaminyl-tRNA(Gln) + L-glutamate + ADP + phosphate + H(+). The catalysed reaction is L-aspartyl-tRNA(Asn) + L-glutamine + ATP + H2O = L-asparaginyl-tRNA(Asn) + L-glutamate + ADP + phosphate + 2 H(+). In terms of biological role, allows the formation of correctly charged Asn-tRNA(Asn) or Gln-tRNA(Gln) through the transamidation of misacylated Asp-tRNA(Asn) or Glu-tRNA(Gln) in organisms which lack either or both of asparaginyl-tRNA or glutaminyl-tRNA synthetases. The reaction takes place in the presence of glutamine and ATP through an activated phospho-Asp-tRNA(Asn) or phospho-Glu-tRNA(Gln). This is Aspartyl/glutamyl-tRNA(Asn/Gln) amidotransferase subunit C from Burkholderia mallei (strain NCTC 10247).